Reading from the N-terminus, the 10061-residue chain is MATH and LRR domain-containing protein PFE0570w (10061 aa).

Disordered regions lie at residues 166–210 (DMDN…EKKN), 244–471 (NNSD…NDIN), and 1004–1170 (DDQK…DTSF). The segment covering 169-179 (NNPNNHVSNNG) has biased composition (polar residues). Residues 193 to 205 (TSNSIHKNNNTNI) are compositionally biased toward low complexity. A compositionally biased stretch (basic and acidic residues) spans 270 to 282 (KKSDNNNDKKNDD). The span at 285–320 (NNNNNNNNNNNNNNNNNDNHVCTSNNQPNTINKQNN) shows a compositional bias: low complexity. Polar residues predominate over residues 328 to 338 (DQNGRTKITPQ). A coiled-coil region spans residues 338 to 366 (QNVNQKEKEIKNVVKEKNNFNREEKDITN). Basic and acidic residues predominate over residues 342–365 (QKEKEIKNVVKEKNNFNREEKDIT). Positions 366-375 (NSDDYDENST) are enriched in acidic residues. 2 stretches are compositionally biased toward polar residues: residues 376–389 (DESC…TSSE) and 421–437 (VPSN…SAEN). A coiled-coil region spans residues 431 to 469 (NVKSAENCNKEKKKKKKKKKKELNNDNKDNTLNNETMND). Residues 441–451 (EKKKKKKKKKK) are compositionally biased toward basic residues. Residues 460–471 (NTLNNETMNDIN) show a composition bias toward low complexity. Basic and acidic residues predominate over residues 1025–1037 (NEEKPNVNKEGNI). The segment covering 1047 to 1057 (NKNKNNNNNNN) has biased composition (low complexity). Positions 1058–1132 (DKNDKNDKND…KKKKNGKEQN (75 aa)) are enriched in basic and acidic residues. Residues 1133 to 1165 (EDSTESDDESSVIDDNYIDDDSCDCDSESDSID) are compositionally biased toward acidic residues. Positions 1328–1458 (NGKIELYIPN…SGGLLIKGKV (131 aa)) constitute an MATH domain. Residues 1651-1698 (GGNLQNEQKGDEDVKKEDVKKENVNKEEIKNGNNNNNNDENENEVDDN) are disordered. Basic and acidic residues predominate over residues 1658–1680 (QKGDEDVKKEDVKKENVNKEEIK). Residues 1916–1948 (NYLSNLNKVKININDLNNNIVDVNNSIHNIEKE) are a coiled coil. Basic and acidic residues predominate over residues 1973 to 1995 (HKETSSIQNKGKEKSNNNIKSDD). Disordered stretches follow at residues 1973-1998 (HKET…DNNN), 2155-2245 (LNKS…PSYK), 2427-2566 (YSDD…NNIK), and 3120-3139 (SNET…NEMK). Residues 2216–2228 (NNDDKDDDDDDSY) show a composition bias toward acidic residues. Basic and acidic residues predominate over residues 2235-2245 (SDGKKNDPSYK). The span at 2475–2484 (NNNNNNNNMM) shows a compositional bias: low complexity. Composition is skewed to basic and acidic residues over residues 2487–2496 (DDNKVNKNEE) and 2505–2527 (QIKE…RNED). Low complexity-rich tracts occupy residues 2552–2564 (NNNN…NNNN) and 3121–3133 (NETN…NRTN). The stretch at 2555 to 2580 (NNNNNNNNNNIKRLDDSYNKLLKNKN) forms a coiled coil. The chain crosses the membrane as a helical span at residues 3398-3418 (KLILKKIFMYLNIICMIIKYI). Disordered stretches follow at residues 3802-3826 (STND…YSKK), 3847-3890 (LTSG…DNNN), and 3919-3953 (ESND…EKKS). A compositionally biased stretch (basic and acidic residues) spans 3809-3822 (VDRSDDSESNDDKK). Low complexity predominate over residues 3851–3890 (NSSSKNSKKNSNNESIQMDNTNNSNSNNNNKNDNNNDNNN). A compositionally biased stretch (polar residues) spans 3926 to 3941 (KNQNIQSNEQSVTPNR). The span at 3942 to 3953 (NIEENKDHEKKS) shows a compositional bias: basic and acidic residues. Residues 3977–4001 (EHLGNATAVLNILQKKLENEELKKL) adopt a coiled-coil conformation. A compositionally biased stretch (basic and acidic residues) spans 4039–4065 (VSAHKEKNVKTDSSDDKKKKEDNENNN). Disordered stretches follow at residues 4039-4074 (VSAH…IIHN), 4155-4180 (KGNN…NNMG), 4352-4414 (SNNN…NNNN), 4919-4943 (NKRK…DNDN), 4991-5030 (DGLN…KNEK), and 5179-5207 (SKIA…KSNL). Over residues 4157 to 4178 (NNSKDNNNNNNNNNNNNNNKNN) the composition is skewed to low complexity. The stretch at 4399–4424 (NNNNNNNNNNNNNNNNVNKEIIKLNS) forms a coiled coil. Low complexity-rich tracts occupy residues 4929–4943 (NNNN…DNDN), 5004–5019 (NMNN…NNSN), and 5185–5202 (NGNN…NNNN). Residues 5006 to 5046 (NNVKNKNNNNNNSNNKRKKNEKNEKIDKIEQFLHESELEKD) adopt a coiled-coil conformation. Coiled coils occupy residues 5486 to 5563 (NNNN…NIYE), 5728 to 5810 (DVLK…DKEE), and 5900 to 6022 (MNND…INNY). 3 stretches are compositionally biased toward basic and acidic residues: residues 5716–5732 (KDAK…VLKD), 5738–5811 (SNKE…KEEP), and 5909–5953 (NKNK…KKDN). Disordered regions lie at residues 5716-5816 (KDAK…QINE), 5892-6009 (EIIN…KKLK), 6123-6142 (KSET…VDGK), 6299-6338 (NDSI…DKGE), 6722-6760 (NMNN…NNNI), 7585-7730 (EDML…VEEK), and 7744-7787 (DLLS…KKSS). A compositionally biased stretch (low complexity) spans 5954–5968 (NNSNNNNNNNNLSNN). Residues 5969–5978 (GEEDPNDSDS) show a composition bias toward acidic residues. Residues 5991 to 6003 (NKNINDDSDDNNK) show a composition bias toward basic and acidic residues. Over residues 6129-6138 (SNKNVESNDN) the composition is skewed to polar residues. 2 stretches are compositionally biased toward low complexity: residues 6314 to 6333 (SNSN…NNNN) and 6722 to 6759 (NMNN…NNNN). A coiled-coil region spans residues 6719-6743 (NMNNMNNNNNNNNNNNNNNNNNNNN). Basic and acidic residues predominate over residues 7585–7599 (EDMLHSKKTDVIQHG). Over residues 7600–7685 (DEEEDDEEDD…EHINEEEQED (86 aa)) the composition is skewed to acidic residues. 4 coiled-coil regions span residues 7601-7637 (EEED…DIED), 7710-7813 (NTKI…NKNE), 7934-7961 (KTDE…IDNE), and 8217-8241 (NINN…GKRE). Residues 7749 to 7765 (SKKKNHKDKRNASKNKN) show a composition bias toward basic residues. A compositionally biased stretch (basic and acidic residues) spans 7766 to 7786 (KNKDILKKNENNINDEKEKKS). 3 disordered regions span residues 8189 to 8252 (ETGG…GGEE), 8293 to 8380 (GKVS…IIMS), and 8474 to 8497 (KKKN…MDEE). Positions 8218 to 8242 (INNKEKETNKNEEQQQGEAEGKREG) are enriched in basic and acidic residues. Residues 8243–8252 (EGEEGEGGEE) show a composition bias toward acidic residues. Residues 8305–8314 (LLNDKEHEKD) are compositionally biased toward basic and acidic residues. Positions 8315 to 8363 (NEDNDEDNDEDDDDEDDDEDDEDDDDDDDDDDDDDDDDDYDEDYDEDYD) are enriched in acidic residues. Positions 8364–8374 (EKLVENKKNER) are enriched in basic and acidic residues. The segment covering 8478–8492 (YSNNNIYNNNSSNKV) has biased composition (low complexity). Coiled coils occupy residues 8644-8697 (SETL…ELNN), 8882-8907 (QYLE…VDNY), and 9219-9247 (IDMK…SNNN). Disordered regions lie at residues 9759-9779 (TIPR…NNNS), 9891-9926 (SNTS…SSSN), and 9985-10061 (KNNS…NNIY). 3 stretches are compositionally biased toward low complexity: residues 9764–9779 (NTTT…NNNS), 9899–9926 (NSSN…SSSN), and 9986–10022 (NNSI…NNNT). The span at 10031 to 10041 (IFQQNQNHSDT) shows a compositional bias: polar residues. Residues 10042-10061 (NNNNNNNNKNNSNNNNNNIY) are compositionally biased toward low complexity.

The protein localises to the membrane. This chain is MATH and LRR domain-containing protein PFE0570w, found in Plasmodium falciparum (isolate 3D7).